Reading from the N-terminus, the 340-residue chain is ATP-dependent 6-phosphofructokinase (340 aa).

Gly-11 serves as a coordination point for ATP. 21-25 (RAVVR) provides a ligand contact to ADP. ATP contacts are provided by residues 72-73 (RY) and 102-105 (GDGS). Residue Asp-103 coordinates Mg(2+). 125 to 127 (TID) serves as a coordination point for substrate. Asp-127 (proton acceptor) is an active-site residue. ADP is bound at residue Arg-154. Substrate-binding positions include Arg-162 and 169 to 171 (MGR). ADP is bound by residues 185–187 (GAD), Lys-211, and 213–215 (KNH). Substrate-binding positions include Glu-222, Arg-244, and 250-253 (HIQR).

It belongs to the phosphofructokinase type A (PFKA) family. ATP-dependent PFK group I subfamily. Prokaryotic clade 'B1' sub-subfamily. As to quaternary structure, homotetramer. Requires Mg(2+) as cofactor.

It localises to the cytoplasm. The catalysed reaction is beta-D-fructose 6-phosphate + ATP = beta-D-fructose 1,6-bisphosphate + ADP + H(+). Its pathway is carbohydrate degradation; glycolysis; D-glyceraldehyde 3-phosphate and glycerone phosphate from D-glucose: step 3/4. Allosterically activated by ADP and other diphosphonucleosides, and allosterically inhibited by phosphoenolpyruvate. In terms of biological role, catalyzes the phosphorylation of D-fructose 6-phosphate to fructose 1,6-bisphosphate by ATP, the first committing step of glycolysis. In Lactococcus lactis subsp. lactis (Streptococcus lactis), this protein is ATP-dependent 6-phosphofructokinase.